The primary structure comprises 432 residues: Enolase (432 aa).

A disordered region spans residues 41–64; it reads QVPSGASTGSFEAHELRDGDPKRY. Basic and acidic residues predominate over residues 52–64; sequence EAHELRDGDPKRY. (2R)-2-phosphoglycerate is bound at residue Gln-168. The active-site Proton donor is the Glu-211. Residues Asp-248, Glu-289, and Asp-316 each coordinate Mg(2+). (2R)-2-phosphoglycerate contacts are provided by Lys-341, Arg-370, Ser-371, and Lys-392. The active-site Proton acceptor is Lys-341.

Belongs to the enolase family. It depends on Mg(2+) as a cofactor.

The protein resides in the cytoplasm. It is found in the secreted. The protein localises to the cell surface. The enzyme catalyses (2R)-2-phosphoglycerate = phosphoenolpyruvate + H2O. It participates in carbohydrate degradation; glycolysis; pyruvate from D-glyceraldehyde 3-phosphate: step 4/5. Its function is as follows. Catalyzes the reversible conversion of 2-phosphoglycerate (2-PG) into phosphoenolpyruvate (PEP). It is essential for the degradation of carbohydrates via glycolysis. This is Enolase from Synechocystis sp. (strain ATCC 27184 / PCC 6803 / Kazusa).